Here is a 220-residue protein sequence, read N- to C-terminus: dITP/XTP pyrophosphatase (220 aa).

13-18 contributes to the substrate binding site; sequence SHNAGK. Mg(2+) contacts are provided by aspartate 45 and aspartate 74. Aspartate 74 acts as the Proton acceptor in catalysis. Substrate-binding positions include serine 75, 163–166, lysine 186, and 199–200; these read FGYD and HR.

The protein belongs to the HAM1 NTPase family. As to quaternary structure, homodimer. Mg(2+) serves as cofactor.

It catalyses the reaction XTP + H2O = XMP + diphosphate + H(+). The enzyme catalyses dITP + H2O = dIMP + diphosphate + H(+). The catalysed reaction is ITP + H2O = IMP + diphosphate + H(+). In terms of biological role, pyrophosphatase that catalyzes the hydrolysis of nucleoside triphosphates to their monophosphate derivatives, with a high preference for the non-canonical purine nucleotides XTP (xanthosine triphosphate), dITP (deoxyinosine triphosphate) and ITP. Seems to function as a house-cleaning enzyme that removes non-canonical purine nucleotides from the nucleotide pool, thus preventing their incorporation into DNA/RNA and avoiding chromosomal lesions. This chain is dITP/XTP pyrophosphatase, found in Mesorhizobium japonicum (strain LMG 29417 / CECT 9101 / MAFF 303099) (Mesorhizobium loti (strain MAFF 303099)).